Reading from the N-terminus, the 363-residue chain is tRNA-specific 2-thiouridylase MnmA (363 aa).

ATP contacts are provided by residues 8–15 (AMSGGVDS) and L34. The active-site Nucleophile is C103. Residues C103 and C195 are joined by a disulfide bond. G127 lines the ATP pocket. The interval 145 to 147 (KDQ) is interaction with tRNA. Catalysis depends on C195, which acts as the Cysteine persulfide intermediate.

Belongs to the MnmA/TRMU family.

It is found in the cytoplasm. The enzyme catalyses S-sulfanyl-L-cysteinyl-[protein] + uridine(34) in tRNA + AH2 + ATP = 2-thiouridine(34) in tRNA + L-cysteinyl-[protein] + A + AMP + diphosphate + H(+). Its function is as follows. Catalyzes the 2-thiolation of uridine at the wobble position (U34) of tRNA, leading to the formation of s(2)U34. The chain is tRNA-specific 2-thiouridylase MnmA from Thermobifida fusca (strain YX).